The sequence spans 431 residues: D-tagatose-1,6-bisphosphate aldolase subunit KbaZ (431 aa).

This sequence belongs to the GatZ/KbaZ family. KbaZ subfamily. As to quaternary structure, forms a complex with KbaY.

The protein operates within carbohydrate metabolism; D-tagatose 6-phosphate degradation; D-glyceraldehyde 3-phosphate and glycerone phosphate from D-tagatose 6-phosphate: step 2/2. In terms of biological role, component of the tagatose-1,6-bisphosphate aldolase KbaYZ that is required for full activity and stability of the Y subunit. Could have a chaperone-like function for the proper and stable folding of KbaY. When expressed alone, KbaZ does not show any aldolase activity. The protein is D-tagatose-1,6-bisphosphate aldolase subunit KbaZ of Citrobacter koseri (strain ATCC BAA-895 / CDC 4225-83 / SGSC4696).